We begin with the raw amino-acid sequence, 658 residues long: Protein teflon (658 aa).

The segment at 33–56 adopts a C2H2-type 1 zinc-finger fold; the sequence is LYCHFCRDLFTQLPEFLRHLQSNH. The interval 80–131 is disordered; that stretch reads DKAHEDAQSAGHNSSSGDSRSLMNSEDSRAIDGSEENSDNSPVKPEQIGKQN. The span at 89-104 shows a compositional bias: polar residues; the sequence is AGHNSSSGDSRSLMNS. 2 C2H2-type zinc fingers span residues 608-630 and 634-657; these read YFCK…LISH and FQCT…RNAH.

It belongs to the Teflon family.

The protein localises to the nucleus. It localises to the chromosome. Functionally, specifically required in males for proper segregation of autosomal bivalents at meiosis I. Expression is required in the male germ line prior to spermatocyte stage S4. May have a role as a bridging molecule maintaining adhesion to hold autosome bivalents together via heterochromatic connections. The protein is Protein teflon of Drosophila simulans (Fruit fly).